A 97-amino-acid polypeptide reads, in one-letter code: DNA/RNA-binding protein Alba 1 (97 aa).

Serine 2 carries the post-translational modification N-acetylserine; by ard1 acetylase. 3 residues coordinate RNA: lysine 16, lysine 17, and tyrosine 22. Lysine 16 carries the post-translational modification N6,N6,N6-trimethyllysine; alternate. The residue at position 16 (lysine 16) is an N6,N6-dimethyllysine; alternate. Lysine 16 carries the post-translational modification N6-acetyllysine; alternate. Lysine 16 carries the post-translational modification N6-methyllysine; alternate. At asparagine 31 the chain carries Deamidated asparagine; partial. Glutamine 32 carries the deamidated glutamine; partial modification. Lysine 40 carries the post-translational modification N6-methyllysine; partial. Arginine 42 and arginine 44 together coordinate RNA. An N6-acetyllysine; partial modification is found at lysine 48. The residue at position 51 (aspartate 51) is an Aspartate methyl ester; partial. Asparagine 58 carries the deamidated asparagine; partial modification. At lysine 64 the chain carries N6-acetyllysine; alternate; partial. Residue lysine 64 is modified to N6-methyllysine; alternate; partial. Lysine 68 is modified (N6-acetyllysine; partial). Glutamine 75 carries the N5-methylglutamine; partial modification. The residue at position 81 (aspartate 81) is an Aspartate methyl ester; partial. Residue lysine 97 is modified to N6-methyllysine; partial.

It belongs to the histone-like Alba family. Forms homodimers and higher order oligomers, e.g. homotetramers. In terms of processing, acetylated. Acetylation at Lys-16 by the Pat acetylase decreases DNA-binding affinity. Deacetylation at Lys-16 by the CobB deacetylase increases DNA-binding affinity. Acetylation at Ser-2 is involved in the regulation of the turnover of the protein.

It localises to the cytoplasm. The protein resides in the chromosome. Binds double-stranded DNA tightly but without sequence specificity. Involved in DNA compaction. Possesses DNA endonuclease activity. Prevents transcription after DNA binding. Binds single-stranded DNA and RNA in vitro. Binds rRNA and mRNA in vivo. May play a role in maintaining the structural and functional stability of RNA, and, perhaps, ribosomes. Binds double-stranded RNA (dsRNA) and exhibits RNA chaperone activity. Required for normal growth. The chain is DNA/RNA-binding protein Alba 1 from Saccharolobus islandicus (strain REY15A) (Sulfolobus islandicus).